Reading from the N-terminus, the 428-residue chain is Dihydroorotase (428 aa).

Positions 59 and 61 each coordinate Zn(2+). Substrate contacts are provided by residues 61-63 and N93; that span reads HLR. Zn(2+) contacts are provided by D151, H178, and H231. Residue N277 participates in substrate binding. D304 is a binding site for Zn(2+). Residue D304 is part of the active site. Substrate contacts are provided by residues H308 and 322-323; that span reads FG.

The protein belongs to the metallo-dependent hydrolases superfamily. DHOase family. Class I DHOase subfamily. Zn(2+) is required as a cofactor.

The enzyme catalyses (S)-dihydroorotate + H2O = N-carbamoyl-L-aspartate + H(+). It functions in the pathway pyrimidine metabolism; UMP biosynthesis via de novo pathway; (S)-dihydroorotate from bicarbonate: step 3/3. Its function is as follows. Catalyzes the reversible cyclization of carbamoyl aspartate to dihydroorotate. The polypeptide is Dihydroorotase (Bacillus cereus (strain ZK / E33L)).